The following is a 397-amino-acid chain: Mannosylglycerate synthase (397 aa).

Residues P7–E11, I35, Q66, K76, D100, and D100–A101 contribute to the GDP-alpha-D-mannose site. D102 contributes to the a divalent metal cation binding site. Residues R131 and A136–T139 each bind (R)-glycerate. 2 residues coordinate GDP-alpha-D-mannose: L163 and D192. Residue H217 coordinates a divalent metal cation. Positions 218 and 220 each coordinate GDP-alpha-D-mannose.

It belongs to the glycosyltransferase 78 family. In terms of assembly, homotetramer. Dimer of dimers. Mg(2+) serves as cofactor. It depends on Ca(2+) as a cofactor. Mn(2+) is required as a cofactor. The cofactor is Ni(2+). Requires Co(2+) as cofactor.

It carries out the reaction (R)-glycerate + GDP-alpha-D-mannose = (2R)-2-O-(alpha-D-mannosyl)-glycerate + GDP + H(+). Its activity is regulated as follows. Inhibited by GDP. In terms of biological role, involved in the biosynthesis of the stress protectant 2-O-alpha-D-mannosyl glycerate (MG) which is produced in response to growth at supraoptimal temperature and salinity, and protects several enzymes against inactivation by temperature, freeze-drying and osmotic stress. Catalyzes the condensation of alpha-GDP-D-mannose (GDP-Man) with D-glycerate to produce alpha-mannosyl-D-glycerate. It is specific for GDP-Man, but it can also use alpha-GDP-D-glucose (GDP-Glc), beta-GDP-D-fructose, alpha-UDP-D-mannose and alpha-UDP-D-glucose as sugar donors. It is specific for D-glycerate, but it can also use D-lactate and glycolate as sugar acceptors. This reaction occurs with a net retention of anomeric configuration; the newly formed glycosidic linkage has the same alpha configuration as the sugar donor. In Rhodothermus marinus (Rhodothermus obamensis), this protein is Mannosylglycerate synthase (mgs).